A 197-amino-acid polypeptide reads, in one-letter code: Fucoxanthin-chlorophyll a-c binding protein C, chloroplastic (197 aa).

Residues methionine 1–methionine 31 constitute a chloroplast transit peptide. The next 3 helical transmembrane spans lie at isoleucine 73–isoleucine 94, isoleucine 113–methionine 133, and glycine 174–proline 196.

Belongs to the fucoxanthin chlorophyll protein family. As to quaternary structure, the LHC complex of chromophytic algae is composed of fucoxanthin, chlorophyll A and C bound non-covalently by fucoxanthin chlorophyll proteins (FCPs). The ratio of the pigments in LHC; fucoxanthin: chlorophyll C: chlorophyll A; (0.6-1): (0.1-0.3): (1).

The protein localises to the plastid. It is found in the chloroplast thylakoid membrane. Its function is as follows. The light-harvesting complex (LHC) functions as a light receptor, it captures and delivers excitation energy to photosystems with which it is closely associated. Energy is transferred from the carotenoid and chlorophyll C (or B) to chlorophyll A and the photosynthetic reaction centers where it is used to synthesize ATP and reducing power. In Phaeodactylum tricornutum (Diatom), this protein is Fucoxanthin-chlorophyll a-c binding protein C, chloroplastic (FCPC).